The primary structure comprises 101 residues: Small ribosomal subunit protein uS14 (101 aa).

Belongs to the universal ribosomal protein uS14 family. As to quaternary structure, part of the 30S ribosomal subunit. Contacts proteins S3 and S10.

Its function is as follows. Binds 16S rRNA, required for the assembly of 30S particles and may also be responsible for determining the conformation of the 16S rRNA at the A site. The sequence is that of Small ribosomal subunit protein uS14 from Francisella tularensis subsp. tularensis (strain FSC 198).